The sequence spans 405 residues: Cytochrome P450 107B1 (405 aa).

Cysteine 352 contacts heme.

This sequence belongs to the cytochrome P450 family. Heme serves as cofactor.

The protein localises to the cytoplasm. Not known, probably involved in the catabolism of octane and guaiacol. It displays a weak activity in the O-dealkylation of 7-ethoxycoumarin. This chain is Cytochrome P450 107B1 (cyp107B1), found in Saccharopolyspora erythraea (strain ATCC 11635 / DSM 40517 / JCM 4748 / NBRC 13426 / NCIMB 8594 / NRRL 2338).